Consider the following 206-residue polypeptide: Potassium-transporting ATPase KdpC subunit (206 aa).

A helical transmembrane segment spans residues 14-34 (VLAVFTLFGLGLAYSLIATGI).

The protein belongs to the KdpC family. As to quaternary structure, the system is composed of three essential subunits: KdpA, KdpB and KdpC.

The protein localises to the cell inner membrane. In terms of biological role, part of the high-affinity ATP-driven potassium transport (or Kdp) system, which catalyzes the hydrolysis of ATP coupled with the electrogenic transport of potassium into the cytoplasm. This subunit acts as a catalytic chaperone that increases the ATP-binding affinity of the ATP-hydrolyzing subunit KdpB by the formation of a transient KdpB/KdpC/ATP ternary complex. This is Potassium-transporting ATPase KdpC subunit from Xanthomonas axonopodis pv. citri (strain 306).